Reading from the N-terminus, the 158-residue chain is Transcription elongation factor GreA (158 aa).

The protein belongs to the GreA/GreB family.

Functionally, necessary for efficient RNA polymerase transcription elongation past template-encoded arresting sites. The arresting sites in DNA have the property of trapping a certain fraction of elongating RNA polymerases that pass through, resulting in locked ternary complexes. Cleavage of the nascent transcript by cleavage factors such as GreA or GreB allows the resumption of elongation from the new 3'terminus. GreA releases sequences of 2 to 3 nucleotides. This Psychrobacter sp. (strain PRwf-1) protein is Transcription elongation factor GreA.